Reading from the N-terminus, the 351-residue chain is Phospho-N-acetylmuramoyl-pentapeptide-transferase (351 aa).

The next 10 helical transmembrane spans lie at T17–S37, M61–I83, I88–F105, I130–I150, S158–A178, G190–T210, L230–Y250, I254–I274, I279–V299, and Q328–I348.

The protein belongs to the glycosyltransferase 4 family. MraY subfamily. It depends on Mg(2+) as a cofactor.

The protein localises to the cell inner membrane. It carries out the reaction UDP-N-acetyl-alpha-D-muramoyl-L-alanyl-gamma-D-glutamyl-meso-2,6-diaminopimeloyl-D-alanyl-D-alanine + di-trans,octa-cis-undecaprenyl phosphate = di-trans,octa-cis-undecaprenyl diphospho-N-acetyl-alpha-D-muramoyl-L-alanyl-D-glutamyl-meso-2,6-diaminopimeloyl-D-alanyl-D-alanine + UMP. It participates in cell wall biogenesis; peptidoglycan biosynthesis. Catalyzes the initial step of the lipid cycle reactions in the biosynthesis of the cell wall peptidoglycan: transfers peptidoglycan precursor phospho-MurNAc-pentapeptide from UDP-MurNAc-pentapeptide onto the lipid carrier undecaprenyl phosphate, yielding undecaprenyl-pyrophosphoryl-MurNAc-pentapeptide, known as lipid I. This is Phospho-N-acetylmuramoyl-pentapeptide-transferase from Borrelia duttonii (strain Ly).